Consider the following 111-residue polypeptide: Iron-sulfur cluster insertion protein ErpA (111 aa).

Residues C39, C103, and C105 each contribute to the iron-sulfur cluster site.

The protein belongs to the HesB/IscA family. As to quaternary structure, homodimer. It depends on iron-sulfur cluster as a cofactor.

Functionally, required for insertion of 4Fe-4S clusters for at least IspG. This chain is Iron-sulfur cluster insertion protein ErpA, found in Acinetobacter baumannii (strain AB307-0294).